Here is a 145-residue protein sequence, read N- to C-terminus: D-aminoacyl-tRNA deacylase (145 aa).

A Gly-cisPro motif, important for rejection of L-amino acids motif is present at residues 137-138 (GP).

It belongs to the DTD family. In terms of assembly, homodimer.

It localises to the cytoplasm. The catalysed reaction is glycyl-tRNA(Ala) + H2O = tRNA(Ala) + glycine + H(+). It carries out the reaction a D-aminoacyl-tRNA + H2O = a tRNA + a D-alpha-amino acid + H(+). Functionally, an aminoacyl-tRNA editing enzyme that deacylates mischarged D-aminoacyl-tRNAs. Also deacylates mischarged glycyl-tRNA(Ala), protecting cells against glycine mischarging by AlaRS. Acts via tRNA-based rather than protein-based catalysis; rejects L-amino acids rather than detecting D-amino acids in the active site. By recycling D-aminoacyl-tRNA to D-amino acids and free tRNA molecules, this enzyme counteracts the toxicity associated with the formation of D-aminoacyl-tRNA entities in vivo and helps enforce protein L-homochirality. The sequence is that of D-aminoacyl-tRNA deacylase from Yersinia enterocolitica serotype O:8 / biotype 1B (strain NCTC 13174 / 8081).